We begin with the raw amino-acid sequence, 130 residues long: Small ribosomal subunit protein eS8 (130 aa).

This sequence belongs to the eukaryotic ribosomal protein eS8 family. Part of the 30S ribosomal subunit.

The sequence is that of Small ribosomal subunit protein eS8 from Thermococcus onnurineus (strain NA1).